A 1317-amino-acid chain; its full sequence is DNA-directed RNA polymerase subunit beta' (1317 aa).

4 residues coordinate Zn(2+): C60, C62, C75, and C78. 3 residues coordinate Mg(2+): D535, D537, and D539. The Zn(2+) site is built by C890, C967, C974, and C977.

Belongs to the RNA polymerase beta' chain family. The RNAP catalytic core consists of 2 alpha, 1 beta, 1 beta' and 1 omega subunit. When a sigma factor is associated with the core the holoenzyme is formed, which can initiate transcription. The cofactor is Mg(2+). It depends on Zn(2+) as a cofactor.

It catalyses the reaction RNA(n) + a ribonucleoside 5'-triphosphate = RNA(n+1) + diphosphate. Functionally, DNA-dependent RNA polymerase catalyzes the transcription of DNA into RNA using the four ribonucleoside triphosphates as substrates. The polypeptide is DNA-directed RNA polymerase subunit beta' (Mycolicibacterium smegmatis (strain ATCC 700084 / mc(2)155) (Mycobacterium smegmatis)).